A 138-amino-acid polypeptide reads, in one-letter code: Ribulose bisphosphate carboxylase small subunit (138 aa).

The protein belongs to the RuBisCO small chain family. In terms of assembly, heterohexadecamer of 8 large and 8 small subunits.

The protein resides in the plastid. It is found in the chloroplast. Functionally, ruBisCO catalyzes two reactions: the carboxylation of D-ribulose 1,5-bisphosphate, the primary event in carbon dioxide fixation, as well as the oxidative fragmentation of the pentose substrate in the photorespiration process. Both reactions occur simultaneously and in competition at the same active site. Although the small subunit is not catalytic it is essential for maximal activity. This chain is Ribulose bisphosphate carboxylase small subunit, found in Cyanidioschyzon merolae (strain NIES-3377 / 10D) (Unicellular red alga).